A 305-amino-acid chain; its full sequence is RNA-binding protein with serine-rich domain 1 (305 aa).

A compositionally biased stretch (basic residues) spans 1 to 10; the sequence is MDLSGVKKKS. The segment at 1–161 is necessary for interaction with SRP54, nuclear localization and exon-skipping; it reads MDLSGVKKKS…KRRSPSPKPT (161 aa). The segment at 1–170 is disordered; that stretch reads MDLSGVKKKS…TKVHIGRLTR (170 aa). The segment at 1–220 is necessary for interaction with the cleaved p110 isoform of CDC2L1; it reads MDLSGVKKKS…ENPDEAEKAL (220 aa). Residues lysine 7 and lysine 15 each participate in a glycyl lysine isopeptide (Lys-Gly) (interchain with G-Cter in SUMO2) cross-link. Over residues 33–59 the composition is skewed to basic and acidic residues; the sequence is DRSDEKSKDRSKDKGATKESSEKDRGR. A Phosphoserine modification is found at serine 53. Over residues 68–126 the composition is skewed to low complexity; that stretch reads ASSGSSSTRSRSSSTSSSGSSTSTGSSSGSSSSSASSRSGSSSTSRSSSSSSSSGSPSP. Residues 69-121 are necessary for interactions with UPF2 and UPF3B and UPF2-dependent NMD; it reads SSGSSSTRSRSSSTSSSGSSTSTGSSSGSSSSSASSRSGSSSTSRSSSSSSSS. Basic residues-rich tracts occupy residues 127–143 and 151–167; these read SRRR…KSKP and RKRR…HIGR. Serine 155 and serine 157 each carry phosphoserine. The segment at 156–242 is necessary for interaction with PNN and exon-skipping; it reads PSPKPTKVHI…ITATAVLAPW (87 aa). Residues 159–244 form an interaction with SAP18 and ACIN1 region; that stretch reads KPTKVHIGRL…ATAVLAPWPR (86 aa). At threonine 161 the chain carries Phosphothreonine. Positions 161–240 constitute an RRM domain; the sequence is TKVHIGRLTR…QEITATAVLA (80 aa). An N6-acetyllysine modification is found at lysine 218. A necessary for interaction with TRA2B, nuclear localization and exon-skipping region spans residues 238 to 305; that stretch reads VLAPWPRPPP…RSRSSSNSSR (68 aa). The segment at 240–305 is disordered; it reads APWPRPPPRR…RSRSSSNSSR (66 aa). A compositionally biased stretch (pro residues) spans 242–261; the sequence is WPRPPPRRFSPPRRMLPPLP. Positions 266–298 are enriched in basic residues; the sequence is SPPRMRRRSRSPRRRSPARRRSRSPGRRRHRSR.

The protein belongs to the splicing factor SR family. In terms of assembly, found in mRNA splicing-dependent exon junction complexes (EJC). Found in a post-splicing complex with NXF1, RBM8A, UPF1, UPF2, UPF3A, UPF3B and RNPS1. Component of the heterotrimeric ASAP (apoptosis- and splicing-associated protein) and PSAP complexes consisting of RNPS1, SAP18 and either ACIN1 or PNN, respectively; the ASAP and PSAP complexes probably are formed mutually exclusive. Component of the active spliceosome. Associates with polysomes. Interacts with the cleaved p110 isoform of CDC2L1, CSNK2A1, PNN, SART3, SRP54, SRRM1 and TRA2B/SFRS10. Post-translationally, phosphorylated on one or more of the four Ser/Thr residues (Ser-43, Thr-49, Ser-52 or Ser-53). Ser-53 phosphorylation site is important for splicing and translation stimulation activity in vitro.

The protein resides in the nucleus. It is found in the nucleus speckle. The protein localises to the cytoplasm. Functionally, part of pre- and post-splicing multiprotein mRNP complexes. Auxiliary component of the splicing-dependent multiprotein exon junction complex (EJC) deposited at splice junction on mRNAs. The EJC is a dynamic structure consisting of core proteins and several peripheral nuclear and cytoplasmic associated factors that join the complex only transiently either during EJC assembly or during subsequent mRNA metabolism. Component of the ASAP and PSAP complexes which bind RNA in a sequence-independent manner and are proposed to be recruited to the EJC prior to or during the splicing process and to regulate specific excision of introns in specific transcription subsets. The ASAP complex can inhibit RNA processing during in vitro splicing reactions. The ASAP complex promotes apoptosis and is disassembled after induction of apoptosis. Enhances the formation of the ATP-dependent A complex of the spliceosome. Involved in both constitutive splicing and, in association with SRP54 and TRA2B/SFRS10, in distinctive modulation of alternative splicing in a substrate-dependent manner. Involved in the splicing modulation of BCL2L1/Bcl-X (and probably other apoptotic genes); specifically inhibits formation of proapoptotic isoforms such as Bcl-X(S); the activity is different from the established EJC assembly and function. Participates in mRNA 3'-end cleavage. Involved in UPF2-dependent nonsense-mediated decay (NMD) of mRNAs containing premature stop codons. Also mediates increase of mRNA abundance and translational efficiency. Binds spliced mRNA 20-25 nt upstream of exon-exon junctions. This is RNA-binding protein with serine-rich domain 1 (RNPS1) from Bos taurus (Bovine).